Consider the following 594-residue polypeptide: Aspartate--tRNA(Asp/Asn) ligase (594 aa).

Residue glutamate 176 participates in L-aspartate binding. The segment at 200–203 (QIFK) is aspartate. Arginine 222 is an L-aspartate binding site. ATP contacts are provided by residues 222-224 (RDE) and glutamine 231. Residue histidine 450 coordinates L-aspartate. Position 484 (glutamate 484) interacts with ATP. Arginine 491 serves as a coordination point for L-aspartate. An ATP-binding site is contributed by 536-539 (GLDR).

The protein belongs to the class-II aminoacyl-tRNA synthetase family. Type 1 subfamily. In terms of assembly, homodimer.

Its subcellular location is the cytoplasm. The catalysed reaction is tRNA(Asx) + L-aspartate + ATP = L-aspartyl-tRNA(Asx) + AMP + diphosphate. In terms of biological role, aspartyl-tRNA synthetase with relaxed tRNA specificity since it is able to aspartylate not only its cognate tRNA(Asp) but also tRNA(Asn). Reaction proceeds in two steps: L-aspartate is first activated by ATP to form Asp-AMP and then transferred to the acceptor end of tRNA(Asp/Asn). This chain is Aspartate--tRNA(Asp/Asn) ligase, found in Geobacillus sp. (strain WCH70).